The following is a 793-amino-acid chain: Transcription factor castor (793 aa).

Residues 44 to 53 are compositionally biased toward polar residues; the sequence is NEDISSSTSV. Disordered regions lie at residues 44–101, 199–259, and 272–296; these read NEDI…NLIA, VTST…HTNA, and LEST…DSSY. 3 stretches are compositionally biased toward low complexity: residues 54-68, 81-98, and 210-221; these read QQQQ…QQPQ, SSQN…PNSN, and ATPAPSAGATAG. Thr211 carries the post-translational modification Phosphothreonine. At Ser215 the chain carries Phosphoserine. Residues 233–242 are compositionally biased toward acidic residues; it reads ESADDDEDDD. Over residues 245-254 the composition is skewed to low complexity; sequence LSSLTSCSSS. A compositionally biased stretch (polar residues) spans 273–284; it reads ESTTDSLDSPSM. The C2H2-type 1; atypical zinc finger occupies 377–402; the sequence is FHCHEEPCQGKILSKKDDIIRHLKWH. 3 C2H2-type zinc fingers span residues 439–463, 498–522, and 556–580; these read YHCV…ANFH, YHCC…KTYH, and IHCV…KRKH. The disordered stretch occupies residues 599-682; sequence EESSLDAMPQ…RLKVEDESSN (84 aa). The segment covering 608–629 has biased composition (low complexity); it reads QQQQQQQQQQPTSLSQSQSSSS. The segment covering 630 to 644 has biased composition (polar residues); that stretch reads VCGGSNTSTPLSSLS. The segment at residues 650 to 662 is a DNA-binding region (a.T hook); it reads ARKRGRPPKKIQL.

In terms of tissue distribution, expressed in a specific subset of neuroblasts in the ventral nerve cord and the procephalic region in the embryo. Expressed in many, if not all, late delaminating NBs, and in early NBs, but only after they have undergone several rounds of ganglion mother cell-producing divisions.

It localises to the nucleus. Its function is as follows. Transcription factor that specifies expression of key genes in developing central nervous system (CNS). Essential for many, if not all, late developing neuroblastoma (NB) sublineages. Binds to the 5'-[CG]C[CT][CT]AAAAA[AT]-3' DNA sequence, like hb, suggesting that cas and hb act as a late regulators in early and late CNS NB sublineage, respectively. Acts by repressing expression of nub/pdm-1 and pdm2/pdm-2 POU genes, and restrict their pattern of expression in appropriate cells. Required for a full expression of vvl/drifter and acj6/I-POU; it is however unknown whether it directly activates these genes. Controls engrailed (en) expression in the ventral nerve cord. In Drosophila melanogaster (Fruit fly), this protein is Transcription factor castor (cas).